We begin with the raw amino-acid sequence, 206 residues long: Uridine kinase (206 aa).

11–18 provides a ligand contact to ATP; that stretch reads GGTGSGKS.

Belongs to the uridine kinase family.

It localises to the cytoplasm. The enzyme catalyses uridine + ATP = UMP + ADP + H(+). It catalyses the reaction cytidine + ATP = CMP + ADP + H(+). It functions in the pathway pyrimidine metabolism; CTP biosynthesis via salvage pathway; CTP from cytidine: step 1/3. The protein operates within pyrimidine metabolism; UMP biosynthesis via salvage pathway; UMP from uridine: step 1/1. The protein is Uridine kinase of Clostridium botulinum (strain Langeland / NCTC 10281 / Type F).